The chain runs to 1545 residues: ATP-binding cassette sub-family C member 9 (1545 aa).

At 1–30 (MSLSFCGNNISSYNIYHGVLQNPCFVDALN) the chain is on the extracellular side. An N-linked (GlcNAc...) asparagine glycan is attached at Asn9. The helical transmembrane segment at 31 to 51 (LVPHVFLLFITFPILFIGWGS) threads the bilayer. The Cytoplasmic segment spans residues 52–72 (QSSKVQIHHNTWLHFPGHNLR). The helical transmembrane segment at 73 to 93 (WILTFALLFVHVCEIAEGIVS) threads the bilayer. Topologically, residues 94–101 (DSQRASRH) are extracellular. Residues 102 to 122 (LHLFMPAVMGFVATTTSIVYY) traverse the membrane as a helical segment. At 123 to 132 (HNIETSNFPK) the chain is on the cytoplasmic side. The helical transmembrane segment at 133–153 (LLLALFLYWVMAFITKTIKLV) threads the bilayer. The Extracellular portion of the chain corresponds to 154–167 (KYWQLGWGMSDLRF). The chain crosses the membrane as a helical span at residues 168-188 (CITGVMVILNGLLMAVEINVI). The Cytoplasmic portion of the chain corresponds to 189–301 (RVRRYVFFMN…AFGRPILLSS (113 aa)). Residues 297 to 594 (ILLSSTFRYL…LSTVVRFAVK (298 aa)) enclose the ABC transmembrane type-1 1 domain. A helical membrane pass occupies residues 302 to 322 (TFRYLADLLGFAGPLCISGIV). The Extracellular segment spans residues 323–347 (QRVNEPKNNTTRFSETLSSKEFLEN). N-linked (GlcNAc...) asparagine glycosylation is found at Asn330 and Asn331. Residues 348 to 368 (AHVLAVLLFLALILQRTFLQA) traverse the membrane as a helical segment. Residues 369-420 (SYYVTIETGINLRGALLAMIYNKILRLSTSNLSMGEMTLGQINNLVAIETNQ) are Cytoplasmic-facing. Residues 421–441 (LMWFLFLCPNLWAMPVQIIMG) form a helical membrane-spanning segment. Residues 442–452 (VILLYNLLGSS) lie on the Extracellular side of the membrane. Residues 453–473 (ALVGAAVIVLLAPIQYFIATK) form a helical membrane-spanning segment. Over 474 to 528 (LAEAQKSTLDYSTERLKKTNEILKGIKLLKLYAWEHIFCKSVEETRMKELSSLKT) the chain is Cytoplasmic. Residues 529–549 (FALYTSLSIFMNAAIPIAAVL) form a helical membrane-spanning segment. Residues 550–568 (ATFVTHAYASGNNLKPAEA) lie on the Extracellular side of the membrane. Residues 569-589 (FASLSLFHILVTPLFLLSTVV) traverse the membrane as a helical segment. The Cytoplasmic segment spans residues 590–986 (RFAVKAIISV…TCWWYLTSGG (397 aa)). An ABC transporter 1 domain is found at 668–908 (IKVTNGYFSW…DVELYEHWKT (241 aa)). 701–708 (GQVGCGKS) serves as a coordination point for ATP. The segment at 940–963 (REAKAQMEDEDEEEEEEEDEDDNM) is disordered. Residues 947–962 (EDEDEEEEEEEDEDDN) show a composition bias toward acidic residues. Residues 987–1007 (FFLLFLMIFSKLLKHSVIVAI) form a helical membrane-spanning segment. An ABC transmembrane type-1 2 domain is found at 990–1270 (LFLMIFSKLL…VVRNLADLEV (281 aa)). Topologically, residues 1008 to 1030 (DYWLATWTSEYSINDPGKADQTF) are extracellular. Residues 1031–1051 (YVAGFSILCGAGIFLCLVTSL) traverse the membrane as a helical segment. Over 1052–1123 (TVEWMGLTAA…TLLCLSAIGM (72 aa)) the chain is Cytoplasmic. Residues 1124–1144 (ISYATPVFLIALAPLGVAFYF) form a helical membrane-spanning segment. Residues 1145–1241 (IQKYFRVASK…IASISGSSNS (97 aa)) are Extracellular-facing. A helical membrane pass occupies residues 1242–1262 (GLVGLGLLYALTITNYLNWVV). Over 1263-1545 (RNLADLEVQM…LFSTLVMTNK (283 aa)) the chain is Cytoplasmic. Residues 1308–1542 (IKIHDLCVRY…KNGLFSTLVM (235 aa)) enclose the ABC transporter 2 domain. Position 1342–1349 (1342–1349 (GRTGSGKS)) interacts with ATP.

This sequence belongs to the ABC transporter superfamily. ABCC family. Conjugate transporter (TC 3.A.1.208) subfamily. Interacts with KCNJ11. Interacts with KCNJ8. Expressed at high levels in heart, skeletal muscle and ovary. Moderate levels are found in brain, tongue and pancreatic islets. Low levels are found in lung, testis and adrenal gland. Expressed at very low levels in stomach, colon, thyroid and pituitary.

The protein localises to the membrane. Functionally, subunit of ATP-sensitive potassium channels (KATP). Can form cardiac and smooth muscle-type KATP channels with KCNJ11. KCNJ11 forms the channel pore while ABCC9 is required for activation and regulation. Can form a sulfonylurea-sensitive but ATP-insensitive potassium channel with KCNJ8. In Rattus norvegicus (Rat), this protein is ATP-binding cassette sub-family C member 9 (Abcc9).